A 638-amino-acid chain; its full sequence is MDRIIGIDLGTTNSCVSILENGNVKVIENAEGTRTTPSIIAYANDGEILVGQSAKRQAVTNPHNTLYAVKRLIGRKFEEDVVQKDIQMVPYKIVKADNGDAWVEVNGQKMAPPQISAEILKKMKKTAEDYLGEAVTEAVITVPAYFNDSQRQATKDAGRIASVDVKRIINEPTAAALAYGMDKAKGDHTVIVYDLGGGTFDVSVIEIAEVDGEHQFEVLATNGDTFLGGEDFDIRLIDYFVHEFKKESGMNLKGDPLAMQRLKEAAEKAKIELSSSTQTEVNLPYITADATGPKHLVVKISRSKLESLVEDLVQRTIAPCEMALKDAGIDRSKINDVILVGGQTRMPLVQKLVTEFFGKEARKDVNPDEAVAMGAAIQGAVLAGDVKDVLLLDVSPLTLGIEAMGGVMTALIKKTPRFLPRNPSVLTADDNQENAVAIHVLQGERKQAGQNKSLGKFDLAEIPPAPRGVPQIEVTFDIDANGILHVGAKDKATGKQQSIVIKANSGLSEEEIQQMVRDAEVNSEEDRKFEELASARNQGDALVHSTRKMIADAGDKVTAEQKTAVEAALVALEAAIKGDDKAAIEAKVEELSKVSAPIAQKMYAEQAENPEAAAKPAEENAKADDVVDAEFEEVKDHK.

Residue Thr-199 is modified to Phosphothreonine; by autocatalysis. The segment covering 605–615 (EQAENPEAAAK) has biased composition (low complexity). Residues 605-624 (EQAENPEAAAKPAEENAKAD) form a disordered region.

It belongs to the heat shock protein 70 family.

Functionally, acts as a chaperone. The protein is Chaperone protein DnaK (dnaK) of Pseudomonas savastanoi pv. glycinea (Pseudomonas syringae pv. glycinea).